The following is a 121-amino-acid chain: Basic phospholipase A2 3 (121 aa).

7 disulfide bridges follow: Cys-26–Cys-115, Cys-28–Cys-44, Cys-43–Cys-95, Cys-49–Cys-121, Cys-50–Cys-88, Cys-57–Cys-81, and Cys-75–Cys-86. 3 residues coordinate Ca(2+): Tyr-27, Gly-29, and Gly-31. Residue His-47 is part of the active site. Residue Asp-48 coordinates Ca(2+). Residue Asp-89 is part of the active site.

The protein belongs to the phospholipase A2 family. Group II subfamily. D49 sub-subfamily. Ca(2+) is required as a cofactor. Expressed by the venom gland.

The protein resides in the secreted. The catalysed reaction is a 1,2-diacyl-sn-glycero-3-phosphocholine + H2O = a 1-acyl-sn-glycero-3-phosphocholine + a fatty acid + H(+). Functionally, PLA2 catalyzes the calcium-dependent hydrolysis of the 2-acyl groups in 3-sn-phosphoglycerides. This chain is Basic phospholipase A2 3, found in Daboia russelii (Russel's viper).